The primary structure comprises 442 residues: Glutamate-1-semialdehyde 2,1-aminomutase (442 aa).

K282 carries the N6-(pyridoxal phosphate)lysine modification.

Belongs to the class-III pyridoxal-phosphate-dependent aminotransferase family. HemL subfamily. As to quaternary structure, homodimer. Pyridoxal 5'-phosphate serves as cofactor.

It localises to the cytoplasm. The catalysed reaction is (S)-4-amino-5-oxopentanoate = 5-aminolevulinate. Its pathway is porphyrin-containing compound metabolism; protoporphyrin-IX biosynthesis; 5-aminolevulinate from L-glutamyl-tRNA(Glu): step 2/2. The chain is Glutamate-1-semialdehyde 2,1-aminomutase from Polaromonas naphthalenivorans (strain CJ2).